A 555-amino-acid polypeptide reads, in one-letter code: Probable Xaa-Pro aminopeptidase BC1G_13431 (555 aa).

The Mn(2+) site is built by D303, D314, E458, and E499. A disordered region spans residues 527–555 (EGKEQEEEEEREANRKATESRKQKKTWFW). Residues 538–547 (EANRKATESR) are compositionally biased toward basic and acidic residues.

This sequence belongs to the peptidase M24B family. Requires Mn(2+) as cofactor.

The enzyme catalyses Release of any N-terminal amino acid, including proline, that is linked to proline, even from a dipeptide or tripeptide.. Its function is as follows. Catalyzes the removal of a penultimate prolyl residue from the N-termini of peptides. The protein is Probable Xaa-Pro aminopeptidase BC1G_13431 of Botryotinia fuckeliana (strain B05.10) (Noble rot fungus).